The chain runs to 229 residues: Flagellar L-ring protein (229 aa).

Residues 1–23 form the signal peptide; sequence MSPLTRIALALAASAALVLALTA. A lipid anchor (N-palmitoyl cysteine) is attached at cysteine 24. A lipid anchor (S-diacylglycerol cysteine) is attached at cysteine 24.

This sequence belongs to the FlgH family. As to quaternary structure, the basal body constitutes a major portion of the flagellar organelle and consists of four rings (L,P,S, and M) mounted on a central rod.

It is found in the cell outer membrane. The protein localises to the bacterial flagellum basal body. In terms of biological role, assembles around the rod to form the L-ring and probably protects the motor/basal body from shearing forces during rotation. The sequence is that of Flagellar L-ring protein from Anaeromyxobacter dehalogenans (strain 2CP-C).